The following is a 984-amino-acid chain: Mineralocorticoid receptor (984 aa).

The interval 1–602 is modulating; sequence METKGYHSLP…STGSSRPSKI (602 aa). Residues 231–243 show a composition bias toward polar residues; it reads QGTPLTCSPNVEN. Disordered regions lie at residues 231 to 329 and 347 to 373; these read QGTP…AAST and GTSA…QEVP. Ser250, Ser259, Ser283, Ser287, and Ser299 each carry phosphoserine. Residues 259–291 are compositionally biased toward low complexity; that stretch reads SPLSSPLSSMKSSISSPPSHCSVKSPVSSPNNV. Residues 292-329 show a composition bias toward polar residues; it reads TLRSSVSSPANINNSRCSVSSPSNTNNRSTLSSPAAST. Zn(2+)-binding residues include Cys603, Cys606, Cys620, Cys623, Cys639, Cys645, Cys655, and Cys658. NR C4-type zinc fingers lie at residues 603 to 623 and 639 to 663; these read CLVC…CGSC and CAGR…LQKC. A DNA-binding region (nuclear receptor) is located at residues 603-668; that stretch reads CLVCGDEASG…RLQKCLQAGM (66 aa). The interval 669–725 is hinge; it reads NLGARKSKKLGKLKGIHEEQPQQQQPPPPPPPPQSPEEGTTYIAPAKEPSVNTALVP. The tract at residues 684 to 710 is disordered; the sequence is IHEEQPQQQQPPPPPPPPQSPEEGTTY. A compositionally biased stretch (pro residues) spans 692–703; sequence QQPPPPPPPPQS. An NR LBD domain is found at 726 to 964; the sequence is QLSTISRALT…EFPAMLVEII (239 aa). Asn770 and Gln776 together coordinate 21-hydroxyprogesterone. Asn770 and Gln776 together coordinate aldosterone. Residues Asn770 and Gln776 each contribute to the progesterone site. Residues 782–785 form an important for coactivator binding region; the sequence is KWAK. 21-hydroxyprogesterone is bound by residues Arg817 and Thr945. Aldosterone-binding residues include Arg817 and Thr945. Residues Arg817 and Thr945 each contribute to the progesterone site.

This sequence belongs to the nuclear hormone receptor family. NR3 subfamily. In terms of assembly, heteromultimeric cytoplasmic complex with HSP90, HSP70, and FKBP4, in the absence of ligand. After ligand binding, it translocates to the nucleus and binds to DNA as a homodimer and as a heterodimer with NR3C1. May interact with HSD11B2 in the absence of ligand. Binds the coactivators NCOA1, NCOA2, TIF1 and NRIP1. In terms of processing, phosphorylated. Ubiquitous. Highly expressed in distal tubules, convoluted tubules and cortical collecting duct in kidney, and in sweat glands. Detected at lower levels in cardiomyocytes, in epidermis and in colon enterocytes.

The protein resides in the cytoplasm. It localises to the nucleus. The protein localises to the endoplasmic reticulum membrane. Its function is as follows. Receptor for both mineralocorticoids (MC) such as aldosterone and glucocorticoids (GC) such as corticosterone or cortisol. Binds to mineralocorticoid response elements (MRE) and transactivates target genes. The effect of MC is to increase ion and water transport and thus raise extracellular fluid volume and blood pressure and lower potassium levels. This is Mineralocorticoid receptor (NR3C2) from Homo sapiens (Human).